The following is a 64-amino-acid chain: Large ribosomal subunit protein bL35 (64 aa).

Residues 1-55 (MPKMKTNKSVSARFKLTASGQLKRTRPGKRHKLSKKSSQEKRNLSKQPLVDKGQV) are disordered. A compositionally biased stretch (basic residues) spans 23–35 (KRTRPGKRHKLSK).

It belongs to the bacterial ribosomal protein bL35 family.

The polypeptide is Large ribosomal subunit protein bL35 (Chlamydia pneumoniae (Chlamydophila pneumoniae)).